The sequence spans 1069 residues: Protocadherin-8 (1069 aa).

An N-terminal signal peptide occupies residues 1–29 (MSPVKRWGSPCLFPLQLFSLCWVLSVAQS). Cadherin domains follow at residues 30–135 (KTVR…APRF), 136–245 (PRAQ…SPAF), 247–354 (QGAV…APDI), 393–497 (QETG…APLF), 498–609 (TKPV…SPVL), and 615–721 (ANGS…VPAS). At 30–747 (KTVRYSTFEE…SGPSLQWDTP (718 aa)) the chain is on the extracellular side. N616 carries an N-linked (GlcNAc...) asparagine glycan. A disordered region spans residues 719 to 738 (PASAGSPEHFRPPGSRLAPS). Residues 748 to 768 (LIVIIVLAGSCTLLLAAIIAI) traverse the membrane as a helical segment. The Cytoplasmic segment spans residues 769–1069 (ATTCNRRKKE…SPKKGTNENV (301 aa)). Disordered stretches follow at residues 777 to 859 (KEVR…TGES), 905 to 927 (REAEKFSGKDSGKGDSDFNDSDS), and 1031 to 1069 (LSPPRPGRLPDLQEIGVPLYESPPGGRYVSPKKGTNENV). Composition is skewed to basic and acidic residues over residues 780 to 790 (RKGGALREERP) and 905 to 920 (REAEKFSGKDSGKGDS). S1052 is modified (phosphoserine).

In terms of assembly, the N-terminal extracellular domain forms homophilic interactions; these interactions activate p38 MAPK via TAOK2 and trigger endocytosis. Interacts with CDH2; this interaction may lead to CDH2 cointernalization. Interacts with CDH11. Interacts with TAOK2. In terms of tissue distribution, enriched in brain relative to peripheral tissues, with low expression in the testis. Expressed in hippocampal neurons (at protein level).

It is found in the cell membrane. It localises to the cell projection. Its subcellular location is the dendrite. The protein resides in the presynaptic cell membrane. The protein localises to the postsynaptic cell membrane. Functionally, calcium-dependent cell-adhesion protein. May play a role in activity-induced synaptic reorganization underlying long term memory. Could be involved in CDH2 internalization through TAOK2/p38 MAPK pathway. In hippocampal neurons, may play a role in the down-regulation of dendritic spines, maybe through its action on CDH2 endocytosis. The chain is Protocadherin-8 (Pcdh8) from Rattus norvegicus (Rat).